The chain runs to 506 residues: Adenylosuccinate synthetase (506 aa).

GTP contacts are provided by residues 35-41 and 63-65; these read GDEGKGK and GHT. Asp-36 acts as the Proton acceptor in catalysis. Residues Asp-36 and Gly-63 each contribute to the Mg(2+) site. IMP-binding positions include 36-39, 61-64, Thr-212, Arg-226, Asn-304, Thr-319, and Arg-383; these read DEGK and NAGH. Residue His-64 is the Proton donor of the active site. Residue 379-385 participates in substrate binding; that stretch reads VTTKRKR. GTP contacts are provided by residues Arg-385, 411 to 413, and 494 to 496; these read KLD and GVG.

The protein belongs to the adenylosuccinate synthetase family. In terms of assembly, homodimer. The cofactor is Mg(2+).

The protein resides in the cytoplasm. The enzyme catalyses IMP + L-aspartate + GTP = N(6)-(1,2-dicarboxyethyl)-AMP + GDP + phosphate + 2 H(+). Its pathway is purine metabolism; AMP biosynthesis via de novo pathway; AMP from IMP: step 1/2. Its function is as follows. Plays an important role in the de novo pathway and in the salvage pathway of purine nucleotide biosynthesis. Catalyzes the first committed step in the biosynthesis of AMP from IMP. The chain is Adenylosuccinate synthetase from Drosophila yakuba (Fruit fly).